An 89-amino-acid chain; its full sequence is Small ribosomal subunit protein uS15 (89 aa).

Belongs to the universal ribosomal protein uS15 family. Part of the 30S ribosomal subunit. Forms a bridge to the 50S subunit in the 70S ribosome, contacting the 23S rRNA.

One of the primary rRNA binding proteins, it binds directly to 16S rRNA where it helps nucleate assembly of the platform of the 30S subunit by binding and bridging several RNA helices of the 16S rRNA. Its function is as follows. Forms an intersubunit bridge (bridge B4) with the 23S rRNA of the 50S subunit in the ribosome. The sequence is that of Small ribosomal subunit protein uS15 from Prochlorococcus marinus (strain MIT 9215).